A 241-amino-acid polypeptide reads, in one-letter code: Carboxy-S-adenosyl-L-methionine synthase (241 aa).

Residues Tyr38, 63 to 65, 88 to 89, 116 to 117, Asn131, and Arg198 each bind S-adenosyl-L-methionine; these read GCS, DN, and DI.

The protein belongs to the class I-like SAM-binding methyltransferase superfamily. Cx-SAM synthase family. Homodimer.

The enzyme catalyses prephenate + S-adenosyl-L-methionine = carboxy-S-adenosyl-L-methionine + 3-phenylpyruvate + H2O. Catalyzes the conversion of S-adenosyl-L-methionine (SAM) to carboxy-S-adenosyl-L-methionine (Cx-SAM). The polypeptide is Carboxy-S-adenosyl-L-methionine synthase (Actinobacillus pleuropneumoniae serotype 5b (strain L20)).